The sequence spans 504 residues: Ribonuclease Y (504 aa).

Residues 2 to 22 form a helical membrane-spanning segment; the sequence is TTSIVIGVVLVTVGLTFGWTI. A KH domain is found at 194–279; sequence TVSTVNLPSE…EIVQKVTQEV (86 aa). The HD domain maps to 320 to 413; sequence VLYHSKEVAL…VQVADAISAA (94 aa).

The protein belongs to the RNase Y family.

Its subcellular location is the cell membrane. Its function is as follows. Endoribonuclease that initiates mRNA decay. This is Ribonuclease Y from Treponema pallidum (strain Nichols).